Consider the following 131-residue polypeptide: Hypocretin neuropeptide precursor (131 aa).

Gln-34 bears the Pyrrolidone carboxylic acid mark. 2 disulfides stabilise this stretch: Cys-39/Cys-45 and Cys-40/Cys-47. Leucine amide is present on Leu-66. The segment at 104-131 (EPALRPCSGRRCPSEAASSVAPGGRSGV) is disordered.

Belongs to the orexin family.

It is found in the rough endoplasmic reticulum. The protein resides in the cytoplasmic vesicle. The protein localises to the synapse. Neuropeptides that play a significant role in the regulation of food intake and sleep-wakefulness, possibly by coordinating the complex behavioral and physiologic responses of these complementary homeostatic functions. A broader role in the homeostatic regulation of energy metabolism, autonomic function, hormonal balance and the regulation of body fluids, is also suggested. In terms of biological role, binds to orexin receptors HCRTR1/OX1R and HCRTR2/OX2R with a high affinity. Stimulates food intake. Modulates pituitary luteinizing hormone secretion in an ovarian steroid-dependent manner. Functionally, binds to orexin receptor HCRTR2/OX2R only. Stimulates food intake. Modulates pituitary luteinizing hormone secretion in an ovarian steroid-dependent manner. The chain is Hypocretin neuropeptide precursor (HCRT) from Bos taurus (Bovine).